Here is a 75-residue protein sequence, read N- to C-terminus: uncharacterized protein (75 aa).

This is an uncharacterized protein from Rickettsia conorii (strain ATCC VR-613 / Malish 7).